Reading from the N-terminus, the 459-residue chain is LAS seventeen-binding protein 3 (459 aa).

Positions 219–403 (RPSNGGRGSF…APTSPSTSSP (185 aa)) are disordered. Phosphoserine is present on S227. Residues 229 to 242 (DDDEDDYYDDDDYY) show a composition bias toward acidic residues. The span at 243-262 (NDIPSSFSSTDASSTRPNTR) shows a compositional bias: low complexity. The span at 289–300 (YSRNSRLAPTNS) shows a compositional bias: polar residues. T298 carries the phosphothreonine modification. Phosphoserine occurs at positions 300 and 303. Positions 340 to 350 (DEYDDYDDDYE) are enriched in acidic residues. Residues 351 to 371 (SGYRRGNGRDRTKDREVDDLS) are compositionally biased toward basic and acidic residues. Residues 372–391 (NRFSKSRISSASTPQTSQGR) are compositionally biased toward polar residues. T393 is subject to Phosphothreonine. The segment covering 393–403 (TAPTSPSTSSP) has biased composition (low complexity). Phosphoserine is present on residues S397, S402, and S416. Positions 400–459 (TSSPKAVALYSFAGEESGDLPFRKGDVITILKKSDSQNDWWTGRVNGREGIFPANYVELV) constitute an SH3 domain.

It belongs to the SH3YL1 family. As to quaternary structure, interacts with LAS17. Post-translationally, phosphorylation of Ser-397 is induced 2-fold in response to mating pheromone.

It is found in the cytoplasm. This is LAS seventeen-binding protein 3 (LSB3) from Saccharomyces cerevisiae (strain YJM789) (Baker's yeast).